A 151-amino-acid chain; its full sequence is Large ribosomal subunit protein uL15 (151 aa).

Residues Met1 to Met58 form a disordered region. Residues Lys13–Arg24 show a composition bias toward basic residues. A compositionally biased stretch (gly residues) spans Ile26–Met38.

Belongs to the universal ribosomal protein uL15 family. Part of the 50S ribosomal subunit.

Binds to the 23S rRNA. The protein is Large ribosomal subunit protein uL15 of Prochlorococcus marinus (strain SARG / CCMP1375 / SS120).